The chain runs to 671 residues: Phenol 2-monooxygenase (671 aa).

Residues 10-43 (DVLI…RIFD) and 295-305 (LQEGRVFLAGD) contribute to the FAD site.

It belongs to the PheA/TfdB FAD monooxygenase family. FAD is required as a cofactor.

It localises to the cytoplasm. It catalyses the reaction phenol + NADPH + O2 + H(+) = catechol + NADP(+) + H2O. Its pathway is aromatic compound metabolism; phenol degradation. In terms of biological role, hydroxylates phenol to catechol. Also acts on cresols. In Ralstonia pickettii (Burkholderia pickettii), this protein is Phenol 2-monooxygenase (tbuD).